Consider the following 190-residue polypeptide: UPF0725 protein At2g20625 (190 aa).

It belongs to the UPF0725 (EMB2204) family.

The sequence is that of UPF0725 protein At2g20625 from Arabidopsis thaliana (Mouse-ear cress).